The sequence spans 418 residues: Inner capsid protein sigma-2 (418 aa).

Belongs to the orthoreovirus sigma-1 protein family. Interacts with protein mu-NS; in viral inclusions.

The protein localises to the virion. Functionally, inner capsid (core) component. This Mammalia (T2J) protein is Inner capsid protein sigma-2 (S2).